We begin with the raw amino-acid sequence, 230 residues long: Ureidoacrylate amidohydrolase RutB (230 aa).

The active-site Proton acceptor is Asp24. Residue Lys133 is part of the active site. Cys166 acts as the Nucleophile in catalysis.

Belongs to the isochorismatase family. RutB subfamily.

The catalysed reaction is (Z)-3-ureidoacrylate + H2O + H(+) = (Z)-3-aminoacrylate + NH4(+) + CO2. The enzyme catalyses (Z)-3-ureidoacrylate + H2O = (Z)-3-aminoacrylate + carbamate + H(+). It catalyses the reaction (Z)-2-methylureidoacrylate + H2O + H(+) = (Z)-2-methylaminoacrylate + NH4(+) + CO2. Functionally, hydrolyzes ureidoacrylate to form aminoacrylate and carbamate. The carbamate hydrolyzes spontaneously, thereby releasing one of the nitrogen atoms of the pyrimidine ring as ammonia and one of its carbon atoms as CO2. This Escherichia coli O127:H6 (strain E2348/69 / EPEC) protein is Ureidoacrylate amidohydrolase RutB.